Reading from the N-terminus, the 89-residue chain is Small ribosomal subunit protein uS15 (89 aa).

This sequence belongs to the universal ribosomal protein uS15 family. In terms of assembly, part of the 30S ribosomal subunit. Forms a bridge to the 50S subunit in the 70S ribosome, contacting the 23S rRNA.

Functionally, one of the primary rRNA binding proteins, it binds directly to 16S rRNA where it helps nucleate assembly of the platform of the 30S subunit by binding and bridging several RNA helices of the 16S rRNA. Forms an intersubunit bridge (bridge B4) with the 23S rRNA of the 50S subunit in the ribosome. The sequence is that of Small ribosomal subunit protein uS15 from Bifidobacterium animalis subsp. lactis (strain AD011).